The chain runs to 372 residues: Glutamate 5-kinase (372 aa).

Position 14 (Lys14) interacts with ATP. Substrate contacts are provided by Ser54, Asp141, and Asn153. Position 173-174 (173-174 (TD)) interacts with ATP. Positions 280 to 358 (RGHVVIDAGA…GEIEAVLGYM (79 aa)) constitute a PUA domain.

It belongs to the glutamate 5-kinase family.

It is found in the cytoplasm. It catalyses the reaction L-glutamate + ATP = L-glutamyl 5-phosphate + ADP. It functions in the pathway amino-acid biosynthesis; L-proline biosynthesis; L-glutamate 5-semialdehyde from L-glutamate: step 1/2. Catalyzes the transfer of a phosphate group to glutamate to form L-glutamate 5-phosphate. The sequence is that of Glutamate 5-kinase from Burkholderia thailandensis (strain ATCC 700388 / DSM 13276 / CCUG 48851 / CIP 106301 / E264).